Consider the following 272-residue polypeptide: MDSNNTEFKDNYQHIPDDIPLTNIKLPNEWVLYLYDKQLFKKMANRPNFQAKPHKALCTISTVNDLLYIMELMKVNNDPKIKSVETDGKINLDANDYIIMRKGIEPIWEDPRNSNGGTFTVKMDHSKGYDVWKIFIQYILGETLTSEISDMKSINGITVSYISDSYNFQNPASKNTLGNTLGNSLGNSLGNGLGNSFTYIKIWDGKPDRTRDQFVSMLPATIIDKIKSDSLMYSQNSKKKHFNEKNIIGKLNSGRKPSNTRGGFSSFGNKRY.

The tract at residues 249–272 (GKLNSGRKPSNTRGGFSSFGNKRY) is disordered. Polar residues predominate over residues 255 to 272 (RKPSNTRGGFSSFGNKRY).

This sequence belongs to the eukaryotic initiation factor 4E family.

Its function is as follows. Recognizes and binds the 7-methylguanosine-containing mRNA cap during an early step in the initiation of protein synthesis and facilitates ribosome binding by inducing the unwinding of the mRNAs secondary structures. The polypeptide is Eukaryotic translation initiation factor 4E homolog (Acanthamoeba polyphaga mimivirus (APMV)).